The primary structure comprises 52 residues: MARFKHVARKLRLAAALKSNRAIPIWVSAKTRLRVRRGFSLRNWRRSKLKNI.

This sequence belongs to the eukaryotic ribosomal protein eL39 family.

The chain is Large ribosomal subunit protein eL39 from Desulfurococcus amylolyticus (strain DSM 18924 / JCM 16383 / VKM B-2413 / 1221n) (Desulfurococcus kamchatkensis).